Consider the following 196-residue polypeptide: Putative HTH-type transcriptional regulator in exeN 3'region (196 aa).

The 66-residue stretch at 120–185 (ASVGGDRLTR…ELFNLFLNHL (66 aa)) folds into the HTH luxR-type domain. The segment at residues 144–163 (TEAIAAALGIGNGTVKNHRK) is a DNA-binding region (H-T-H motif).

This Aeromonas salmonicida protein is Putative HTH-type transcriptional regulator in exeN 3'region.